Reading from the N-terminus, the 181-residue chain is Large ribosomal subunit protein uL5 (181 aa).

It belongs to the universal ribosomal protein uL5 family. As to quaternary structure, part of the 50S ribosomal subunit; part of the 5S rRNA/L5/L18/L25 subcomplex. Contacts the 5S rRNA and the P site tRNA. Forms a bridge to the 30S subunit in the 70S ribosome.

This is one of the proteins that bind and probably mediate the attachment of the 5S RNA into the large ribosomal subunit, where it forms part of the central protuberance. In the 70S ribosome it contacts protein S13 of the 30S subunit (bridge B1b), connecting the 2 subunits; this bridge is implicated in subunit movement. Contacts the P site tRNA; the 5S rRNA and some of its associated proteins might help stabilize positioning of ribosome-bound tRNAs. This Clostridium kluyveri (strain NBRC 12016) protein is Large ribosomal subunit protein uL5.